The primary structure comprises 297 residues: Thiosulfate sulfurtransferase (297 aa).

N6-acetyllysine; alternate is present on Lys-14. N6-succinyllysine; alternate is present on Lys-14. One can recognise a Rhodanese 1 domain in the interval 25–143 (VGPGLRVLDA…WLKEGHPVTS (119 aa)). An O-linked (GlcNAc) serine glycan is attached at Ser-35. The residue at position 38 (Ser-38) is a Phosphoserine. N6-acetyllysine; alternate is present on Lys-136. Lys-136 carries the post-translational modification N6-succinyllysine; alternate. Residues 144-159 (EPSRPEPAIFKATLNR) are hinge. N6-acetyllysine is present on Lys-163. Residues 173–288 (ESKRFQLVDS…WFHRAPPETW (116 aa)) enclose the Rhodanese 2 domain. Residue Lys-175 is modified to N6-acetyllysine; alternate. The residue at position 175 (Lys-175) is an N6-succinyllysine; alternate. Substrate is bound at residue Arg-187. Residue Lys-224 is modified to N6-acetyllysine; alternate. Position 224 is an N6-succinyllysine; alternate (Lys-224). The residue at position 236 (Lys-236) is an N6-acetyllysine. Residue Lys-237 is modified to N6-acetyllysine; alternate. Lys-237 carries the post-translational modification N6-succinyllysine; alternate. Cys-248 serves as the catalytic Cysteine persulfide intermediate. A substrate-binding site is contributed by Lys-250.

As to quaternary structure, monomer. In terms of tissue distribution, expressed in numerous tissues.

The protein resides in the mitochondrion matrix. The catalysed reaction is thiosulfate + hydrogen cyanide = thiocyanate + sulfite + 2 H(+). Together with MRPL18, acts as a mitochondrial import factor for the cytosolic 5S rRNA. Only the nascent unfolded cytoplasmic form is able to bind to the 5S rRNA. Formation of iron-sulfur complexes and cyanide detoxification. Binds molecular oxygen and sulfur. This Bos taurus (Bovine) protein is Thiosulfate sulfurtransferase (TST).